An 89-amino-acid polypeptide reads, in one-letter code: OMEGA-ectatommitoxin(02)-Rm1b (89 aa).

Positions 1 to 30 are cleaved as a signal peptide; it reads MKDSYISIVIAYLMVTFILVSSMPIEGEKG. 3 cysteine pairs are disulfide-bonded: C39–C52, C47–C68, and C70–C79. Residues 43–80 enclose the EGF-like domain; that stretch reads YANYCFNGKCVHFVAQDEPGKPCYSCICDKFYIGKRCG.

Belongs to the EGF domain peptide family. In terms of tissue distribution, expressed by the venom gland.

The protein localises to the secreted. Ant peptide with probable defensive activity which acts as a potent agonist of the mammalian epidermal growth factor receptor (EGFR). Mimics, both structurally and functionally, vertebrate epidermal growth factor (EGF) peptide hormones. In vivo, intraplantar injection in mice causes long-lasting (several days) hypersensitivity of the injected paw to both mechanical and thermal stimuli. Its long-lasting effect is unusual for venom toxins whose effects are usually immediate. One possible explanation is that it would reduce the duration of a nest attack, discourage future attacks, or enhance the actions of subsequent exposure to other pain-inducing venom peptides. The polypeptide is OMEGA-ectatommitoxin(02)-Rm1b (Rhytidoponera metallica (Australian green-headed ant)).